The sequence spans 620 residues: Chaperone protein HscA homolog (620 aa).

It belongs to the heat shock protein 70 family.

Its function is as follows. Chaperone involved in the maturation of iron-sulfur cluster-containing proteins. Has a low intrinsic ATPase activity which is markedly stimulated by HscB. The sequence is that of Chaperone protein HscA homolog from Shewanella baltica (strain OS195).